A 1976-amino-acid polypeptide reads, in one-letter code: Putative callose synthase 8 (1976 aa).

Residues 1–530 (MSHEIVPVDP…FWQIFRSFDR (530 aa)) are Cytoplasmic-facing. Residues 531–551 (MWSFFVLSLQALIIMACHDVG) form a helical membrane-spanning segment. The Extracellular portion of the chain corresponds to 552–565 (SPLQVFNANIFEDV). Residues 566 to 586 (MSIFITSAILKLIKGILDIIF) form a helical membrane-spanning segment. Residues 587-602 (KWKARNTMPINEKKKR) are Cytoplasmic-facing. The chain crosses the membrane as a helical span at residues 603 to 623 (LVKLGFAAMWTIILPVLYSHS). Over 624-648 (RRKYICYFTNYKTWLGEWCFSPYMV) the chain is Extracellular. The chain crosses the membrane as a helical span at residues 649–669 (AVTIYLTGSAIELVLFFVPAI). Over 670-707 (SKYIETSNHGIFKTLSWWGQPRLYVGRGMQETQVSQFK) the chain is Cytoplasmic. Residues 708–728 (YTFFWILVLLTKFAFSYAFEI) traverse the membrane as a helical segment. Over 729–759 (KPLIEPTRLIMKVGVRNYEWHEIFPEVKSNA) the chain is Extracellular. The helical transmembrane segment at 760 to 780 (AAIVAVWAPIMVVYFMDTQIW) threads the bilayer. Topologically, residues 781–1544 (YSVYCTIFGG…FDFFRMLSCY (764 aa)) are cytoplasmic. Residues 1545–1565 (FTTIGFYFSSLISVIGIYIYL) form a helical membrane-spanning segment. Residues 1566-1595 (YGQLYLVLSGLQKTLILEAKVKNIKSLETA) are Extracellular-facing. A helical transmembrane segment spans residues 1596 to 1616 (LASQSFIQLGLLTGLPMVMEI). Residues 1617–1620 (GLEK) lie on the Cytoplasmic side of the membrane. Residues 1621-1641 (GFLIAFQDFILMQLQLAAFFF) form a helical membrane-spanning segment. At 1642-1688 (TFSLGTKTHYFGRTILHGGAKYRPTGRKVVVFHANFSENYRLYSRSH) the chain is on the extracellular side. N-linked (GlcNAc...) asparagine glycosylation occurs at Asn-1676. The helical transmembrane segment at 1689–1709 (FIKGFELMILLVVYELFKHTS) threads the bilayer. Topologically, residues 1710–1715 (QSNMAY) are cytoplasmic. A helical membrane pass occupies residues 1716 to 1736 (SFITFSVWFMSFTWLCAPFLF). Residues 1737–1790 (NPSGFTWEIIVGDWRDWNRWIKEQGGIGIQQDKSWQSWWNDEQAHLRGSGVGAR) are Extracellular-facing. The chain crosses the membrane as a helical span at residues 1791 to 1811 (CLEIILSLRFFVYQYGLVYHL). Residues 1812-1819 (DITQSNTN) lie on the Cytoplasmic side of the membrane. Residues 1820-1840 (IIVYALSWVVILATFFTVKAV) form a helical membrane-spanning segment. Topologically, residues 1841–1856 (DLGRQLFSTRKHLVFR) are extracellular. A helical membrane pass occupies residues 1857–1877 (FFKVFVFVSILTIIITLANIC). Residues 1878–1884 (HLSVKDL) lie on the Cytoplasmic side of the membrane. The helical transmembrane segment at 1885–1905 (LVSCLAFLPTGWGLILIAQAV) threads the bilayer. Over 1906 to 1928 (RPKIEGTSLWEFTQVLARAYDYG) the chain is Extracellular. A helical transmembrane segment spans residues 1929 to 1949 (MGVVLFAPMAILAWLPIISAF). At 1950–1976 (QTRFLFNEAFNRRLQIQPILAGKKKNR) the chain is on the cytoplasmic side.

Belongs to the glycosyltransferase 48 family.

It localises to the cell membrane. It carries out the reaction [(1-&gt;3)-beta-D-glucosyl](n) + UDP-alpha-D-glucose = [(1-&gt;3)-beta-D-glucosyl](n+1) + UDP + H(+). In terms of biological role, involved in callose synthesis at the forming cell plate during cytokinesis. During plant growth and development, callose is found as a transitory component of the cell plate in dividing cells, is a major component of pollen mother cell walls and pollen tubes, and is found as a structural component of plasmodesmatal canals. This is Putative callose synthase 8 (CALS8) from Arabidopsis thaliana (Mouse-ear cress).